We begin with the raw amino-acid sequence, 84 residues long: Large ribosomal subunit protein bL27 (84 aa).

Residues 1–22 (MAHKKAGGSTRNGRDSESKRLG) form a disordered region.

This sequence belongs to the bacterial ribosomal protein bL27 family.

The protein is Large ribosomal subunit protein bL27 of Shewanella baltica (strain OS223).